We begin with the raw amino-acid sequence, 180 residues long: Translation initiation factor IF-3 (180 aa).

This sequence belongs to the IF-3 family. As to quaternary structure, monomer.

Its subcellular location is the cytoplasm. In terms of biological role, IF-3 binds to the 30S ribosomal subunit and shifts the equilibrium between 70S ribosomes and their 50S and 30S subunits in favor of the free subunits, thus enhancing the availability of 30S subunits on which protein synthesis initiation begins. This chain is Translation initiation factor IF-3, found in Salmonella typhi.